The chain runs to 238 residues: Uridylate kinase (238 aa).

12-15 is a binding site for ATP; the sequence is KVSG. G54 is a UMP binding site. 2 residues coordinate ATP: G55 and R59. UMP is bound by residues D74 and 135–142; that span reads TGNPYFTT. 4 residues coordinate ATP: T162, N163, Y168, and D171.

This sequence belongs to the UMP kinase family. In terms of assembly, homohexamer.

It localises to the cytoplasm. It carries out the reaction UMP + ATP = UDP + ADP. It participates in pyrimidine metabolism; CTP biosynthesis via de novo pathway; UDP from UMP (UMPK route): step 1/1. Inhibited by UTP. Functionally, catalyzes the reversible phosphorylation of UMP to UDP. The polypeptide is Uridylate kinase (Azorhizobium caulinodans (strain ATCC 43989 / DSM 5975 / JCM 20966 / LMG 6465 / NBRC 14845 / NCIMB 13405 / ORS 571)).